A 310-amino-acid polypeptide reads, in one-letter code: Methionyl-tRNA formyltransferase (310 aa).

(6S)-5,6,7,8-tetrahydrofolate is bound at residue 109 to 112 (SLLP).

It belongs to the Fmt family.

It catalyses the reaction L-methionyl-tRNA(fMet) + (6R)-10-formyltetrahydrofolate = N-formyl-L-methionyl-tRNA(fMet) + (6S)-5,6,7,8-tetrahydrofolate + H(+). Attaches a formyl group to the free amino group of methionyl-tRNA(fMet). The formyl group appears to play a dual role in the initiator identity of N-formylmethionyl-tRNA by promoting its recognition by IF2 and preventing the misappropriation of this tRNA by the elongation apparatus. This chain is Methionyl-tRNA formyltransferase, found in Pseudomonas putida (strain W619).